The sequence spans 596 residues: Sensor protein ChvG (596 aa).

Positions 1 to 22 (MLKKTPETVSDSDDAEERGSER) are disordered. Over 1-47 (MLKKTPETVSDSDDAEERGSERRHRIHPLTIIRRIFGNAVFSSLTRR) the chain is Cytoplasmic. The helical transmembrane segment at 48 to 68 (ILFFNVAATVVLVGGILYLNQ) threads the bilayer. The Periplasmic portion of the chain corresponds to 69 to 283 (FREGLIDARV…VHAERLAIMR (215 aa)). Residues 284–304 (VFGIATLVNIVLSLLLSSTIA) traverse the membrane as a helical segment. An HAMP domain is found at 301–356 (STIATPLRRLSAAAIRVRRGARTREEIPDFSARQDEIGNLSIALREMTTALYDRID). Residues 305–596 (TPLRRLSAAA…SLPAAETHER (292 aa)) lie on the Cytoplasmic side of the membrane. The Histidine kinase domain occupies 364–592 (DVSHELKNPL…RFTLSLPAAE (229 aa)). His-367 carries the phosphohistidine modification.

It localises to the cell inner membrane. The enzyme catalyses ATP + protein L-histidine = ADP + protein N-phospho-L-histidine.. Its function is as follows. Member of a two-component regulatory system ChvG/ChvI. Activates ChvI by phosphorylation (Potential). This Agrobacterium fabrum (strain C58 / ATCC 33970) (Agrobacterium tumefaciens (strain C58)) protein is Sensor protein ChvG (chvG).